The following is a 523-amino-acid chain: Cysteine-rich secretory protein LCCL domain-containing 1 (523 aa).

The N-terminal stretch at 1-23 is a signal peptide; sequence MKYVVQEWLRITTLLFIAQAVSA. One can recognise an SCP domain in the interval 66–206; sequence LDLHNKLRGQ…PKAVYLVCNY (141 aa). A disordered region spans residues 246–298; it reads ERPYSPHEPEEETNEIERQRSKAQDATAQSRPRTHSPSGSTGSEDSEKNEVIS. Residues 269–288 show a composition bias toward polar residues; sequence QDATAQSRPRTHSPSGSTGS. LCCL domains follow at residues 302 to 397 and 403 to 505; these read MSQI…ANSF and TVQA…PGKQ. Cystine bridges form between cysteine 308/cysteine 326, cysteine 330/cysteine 350, cysteine 409/cysteine 431, and cysteine 435/cysteine 458.

This sequence belongs to the CRISP family.

The protein localises to the secreted. The chain is Cysteine-rich secretory protein LCCL domain-containing 1 (CRISPLD1) from Gallus gallus (Chicken).